A 284-amino-acid polypeptide reads, in one-letter code: Bifunctional protein FolD (284 aa).

Residues 166–168 (GAS) and Ile232 contribute to the NADP(+) site.

It belongs to the tetrahydrofolate dehydrogenase/cyclohydrolase family. Homodimer.

It catalyses the reaction (6R)-5,10-methylene-5,6,7,8-tetrahydrofolate + NADP(+) = (6R)-5,10-methenyltetrahydrofolate + NADPH. The enzyme catalyses (6R)-5,10-methenyltetrahydrofolate + H2O = (6R)-10-formyltetrahydrofolate + H(+). It functions in the pathway one-carbon metabolism; tetrahydrofolate interconversion. Functionally, catalyzes the oxidation of 5,10-methylenetetrahydrofolate to 5,10-methenyltetrahydrofolate and then the hydrolysis of 5,10-methenyltetrahydrofolate to 10-formyltetrahydrofolate. This chain is Bifunctional protein FolD, found in Shewanella halifaxensis (strain HAW-EB4).